The following is a 341-amino-acid chain: Basic membrane protein B (341 aa).

Residues 1-14 (MRIVIFILGILLTS) form the signal peptide. Cys15 is lipidated: N-palmitoyl cysteine. The S-diacylglycerol cysteine moiety is linked to residue Cys15.

Belongs to the BMP lipoprotein family. In terms of assembly, monomer.

The protein localises to the cell inner membrane. May be part of an ABC-type nucleoside uptake system involved in the purine salvage pathway. The chain is Basic membrane protein B (bmpB) from Borrelia garinii subsp. bavariensis (strain ATCC BAA-2496 / DSM 23469 / PBi) (Borreliella bavariensis).